Consider the following 155-residue polypeptide: FUN14 domain-containing protein 1 (155 aa).

Over 1-47 the chain is Cytoplasmic; it reads MATRNPPPQDYESDDDSYEVLDLTEYARRHQWWNRVFGHSSGPMVEK. Residue S13 is modified to Phosphoserine; by CK2. At S17 the chain carries Phosphoserine; by ULK1. A Phosphotyrosine; by SRC modification is found at Y18. The YXXL signature appears at 18–21; that stretch reads YEVL. Residues 48–68 form a helical membrane-spanning segment; the sequence is YSVATQIVMGGVTGWCAGFLF. At 69-74 the chain is on the mitochondrial intermembrane side; sequence QKVGKL. The helical transmembrane segment at 75–95 threads the bilayer; sequence AATAVGGGFLLLQIASHSGYV. Over 96 to 133 the chain is Cytoplasmic; it reads QIDWKRVEKDVNKAKRQIKKRANKAAPEINNLIEEATE. A Glycyl lysine isopeptide (Lys-Gly) (interchain with G-Cter in ubiquitin) cross-link involves residue K119. The chain crosses the membrane as a helical span at residues 134 to 154; it reads FIKQNIVISSGFVGGFLLGLA. A topological domain (mitochondrial intermembrane) is located at residue S155.

It belongs to the FUN14 family. Interacts (via YXXL motif) with MAP1 LC3 family proteins MAP1LC3A, MAP1LC3B and GABARAP. Interacts with DNM1L/DPR1. Interacts with GPX4. In terms of processing, phosphorylation at Ser-13 by CK2 and at Tyr-18 by SRC inhibits activation of mitophagy. Following hypoxia, dephosphorylated at Tyr-18, leading to interaction with MAP1 LC3 family proteins and triggering mitophagy. Dephosphorylation is mediated by PGAM5. Phosphorylated by ULK1 at Ser-17 which enhances FUNDC1 binding to LC3. Post-translationally, ubiquitinated on Lys-119. Deubiquitinated by USP19; leading to hypoxia-induced DRP1 oligomerization and GTPase activity. Widely expressed.

It localises to the mitochondrion outer membrane. Its function is as follows. Integral mitochondrial outer-membrane protein that mediates the formation of mitochondria-associated endoplasmic reticulum membranes (MAMs). In turn, mediates angiogenesis and neoangiogenesis through interference with intracellular Ca(2+) communication and regulation of the vascular endothelial growth factor receptor KDR/VEGFR2 expression at both mRNA and protein levels. Also acts as an activator of hypoxia-induced mitophagy, an important mechanism for mitochondrial quality and homeostasis, by interacting with and recruiting LC3 protein family to mitochondria. Mechanistically, recruits DRP1 at ER-mitochondria contact sites leading to DRP1 oligomerization and GTPase activity to facilitate mitochondrial fission during hypoxia. Additionally, plays a role in hepatic ferroptosis by interacting directly with glutathione peroxidase/GPX4 to facilitate its recruitment into mitochondria through TOM/TIM complex where it is degraded by mitophagy. This is FUN14 domain-containing protein 1 (FUNDC1) from Homo sapiens (Human).